The sequence spans 595 residues: Probable serine/threonine-protein kinase fhkC (595 aa).

The tract at residues 1 to 84 is disordered; sequence MNSNKEETTA…MTEDNSKEED (84 aa). Low complexity predominate over residues 18-31; sequence EEQQQQQQPQQQEQ. The segment covering 32-49 has biased composition (polar residues); sequence INTTTASTTSNGENTASD. Residues 50–70 are compositionally biased toward low complexity; that stretch reads NNNNSNNNNNNNTNNTNTNNN. Residues 116–170 enclose the FHA domain; it reads IILGRSKGVCNYTFTSPTVSGKHCKIYRDPTVKSRNVAFVDDTSTNGTFINNEVI. One can recognise a Protein kinase domain in the interval 218-479; it reads YDLREVLGTG…IDQALNHPWF (262 aa). Residues 224–232 and K247 contribute to the ATP site; that span reads LGTGNFASV. The active-site Proton acceptor is the D342. Position 377 is a phosphothreonine; by autocatalysis (T377). The segment at 494 to 595 is disordered; it reads KLEFPPPSTN…DEHEQKKVKN (102 aa). Over residues 508–520 the composition is skewed to polar residues; the sequence is PTPNTTSSNSQLV. Residues 530 to 567 show a composition bias toward low complexity; that stretch reads DNTTDNNNNNNNNNNNNNNNNNNNTTNNSNNIDNNNGN. Residues 585 to 595 show a composition bias toward basic and acidic residues; it reads NDEHEQKKVKN.

The protein belongs to the protein kinase superfamily. CAMK Ser/Thr protein kinase family. CHK2 subfamily.

The catalysed reaction is L-seryl-[protein] + ATP = O-phospho-L-seryl-[protein] + ADP + H(+). It carries out the reaction L-threonyl-[protein] + ATP = O-phospho-L-threonyl-[protein] + ADP + H(+). In Dictyostelium discoideum (Social amoeba), this protein is Probable serine/threonine-protein kinase fhkC (fhkC).